The following is a 116-amino-acid chain: Vesicle-associated membrane protein 5 (116 aa).

The Cytoplasmic portion of the chain corresponds to 1–72 (MAGKELERCQ…RWENARCRIY (72 aa)). Residues 5 to 65 (ELERCQRQAD…KTLAQKKRWE (61 aa)) form the v-SNARE coiled-coil homology domain. Residues serine 41, serine 48, and serine 49 each carry the phosphoserine modification. The helical; Anchor for type IV membrane protein transmembrane segment at 73–93 (MGLAVGIALLILLIVLLVIFL) threads the bilayer. The Vesicular segment spans residues 94–116 (PQSSKGSSAPQVQDAGPASGPGE). The tract at residues 97–116 (SKGSSAPQVQDAGPASGPGE) is disordered.

This sequence belongs to the synaptobrevin family.

Its subcellular location is the cell membrane. The protein resides in the endomembrane system. It is found in the golgi apparatus. The protein localises to the trans-Golgi network membrane. May participate in trafficking events that are associated with myogenesis, such as myoblast fusion and/or GLUT4 trafficking. This is Vesicle-associated membrane protein 5 (VAMP5) from Bos taurus (Bovine).